The following is a 106-amino-acid chain: uncharacterized protein (106 aa).

Residues 1 to 25 (MSVIKKNIPAIGLCICAFFIHSAVG) form the signal peptide.

To the N-terminal of the FimA/PapA family of fimbria proteins.

This is an uncharacterized protein from Salmonella typhi.